A 529-amino-acid chain; its full sequence is Potassium voltage-gated channel subfamily A member 6 (529 aa).

Residues M1–G35 form a disordered region. The Cytoplasmic segment spans residues M1 to G171. The residue at position 3 (S3) is a Phosphoserine. Residues E21 to E30 show a composition bias toward acidic residues. The helical transmembrane segment at P172 to L193 threads the bilayer. Residues E194 to P262 lie on the Extracellular side of the membrane. Residues G203–I238 are disordered. Residues G210 to S219 show a composition bias toward polar residues. A helical membrane pass occupies residues F263 to A284. The S-palmitoyl cysteine moiety is linked to residue C285. Residues C285–I295 lie on the Cytoplasmic side of the membrane. Residues M296–V316 form a helical membrane-spanning segment. Topologically, residues Q317–S337 are extracellular. The chain crosses the membrane as a helical; Voltage-sensor span at residues L338–H358. Topologically, residues S359–M373 are cytoplasmic. The S4-S5 linker stretch occupies residues K360–M373. The helical transmembrane segment at R374–Y395 threads the bilayer. Over F396–I409 the chain is Extracellular. The helical intramembrane region spans P410 to T421. The Selectivity filter motif lies at T422–D427. An intramembrane segment occupies T422 to Y429. The Extracellular segment spans residues P430 to K436. Residues I437–Y465 traverse the membrane as a helical segment. Residues H466–V529 lie on the Cytoplasmic side of the membrane. The segment at D488 to L513 is disordered. Basic and acidic residues predominate over residues D500–P510. S511 is subject to Phosphoserine; by PKA. The PDZ-binding motif lies at T527–V529.

Belongs to the potassium channel family. A (Shaker) (TC 1.A.1.2) subfamily. Kv1.6/KCNA6 sub-subfamily. Homotetramer and heterotetramer of potassium channel proteins. Interacts with KCNAB1 and KCNAB2.

It localises to the cell membrane. It catalyses the reaction K(+)(in) = K(+)(out). In terms of biological role, voltage-gated potassium channel that mediates transmembrane potassium transport in excitable membranes. Forms tetrameric potassium-selective channels through which potassium ions pass in accordance with their electrochemical gradient. The channel alternates between opened and closed conformations in response to the voltage difference across the membrane. Can form functional homotetrameric channels and heterotetrameric channels that contain variable proportions of KCNA1, KCNA2, KCNA4, KCNA6, and possibly other family members as well; channel properties depend on the type of alpha subunits that are part of the channel. Channel properties are modulated by cytoplasmic beta subunits that regulate the subcellular location of the alpha subunits and promote rapid inactivation. Homotetrameric channels display rapid activation and slow inactivation. This Mus musculus (Mouse) protein is Potassium voltage-gated channel subfamily A member 6 (Kcna6).